The sequence spans 861 residues: Importin subunit beta-1 (861 aa).

Position 2 is an N-acetylserine (Ser-2). 19 HEAT repeats span residues 3 to 35, 37 to 66, 90 to 129, 134 to 164, 177 to 208, 219 to 255, 260 to 306, 317 to 362, 367 to 395, 402 to 442, 452 to 484, 496 to 530, 536 to 586, 592 to 629, 634 to 669, 675 to 713, 718 to 764, 773 to 812, and 819 to 859; these read TAEFAQLLENSILSPDQNIRLTSETQLKKLSND, FLQFAGLSSQVLIDENTKLEGRILAALTLK, PEAKNQIKTNALTALVSIEPRIANAAAQLIAAIADIELPH, ELMKIMVDNTGAEQPENVKRASLLALGYMCE, SNNILIAIVQGAQSTETSKAVRLAALNALADS, EGERNYLMQVVCEATQAEDIEVQAAAFGCLCKIMSLY, KPYM…ELAQ, FALS…AQNC, LEPVLEFVEQNITADNWRNREAAVMAFGS, KVQR…ADSV, LPGVVQACLIGLQDHPKVATNCSWTIINLVEQL, YPALVDGLIGAANRIDNEFNARASAFSALTTMVEY, AETS…VIRK, EPVADMLMGLFFRLLEKKDSAFIEDDVFYAISALAASL, EKYLETFSPYLLKALNQVDSPVSITAVGFIADISNS, RRYSDAMMNVLAQMISNPNARRELKPAVLSVFGDIASNI, IPYL…IVAG, FPYVGTIFQFIAQVAEDPQLYSEDATSRAAVGLIGDIAAM, and KQFY…KRQL. In terms of domain architecture, Importin N-terminal spans 25-106; sequence SETQLKKLSN…KTNALTALVS (82 aa). At Ser-836 the chain carries Phosphoserine.

The protein belongs to the importin beta family. Importin beta-1 subfamily. Forms a complex with the importin alpha subunit (SRP1/KAP60). Interacts with Ran (GSP1); interacts specifically with the GTP-bound form of Ran (GTP-Ran), protecting it from GTP hydrolysis and nucleotide exchange. Interacts with nucleoporin NUP1.

The protein localises to the cytoplasm. Its subcellular location is the nucleus. It localises to the nuclear pore complex. In terms of biological role, importin beta subunit that functions in nuclear protein import through association with the importin alpha subunit, which binds to the classical nuclear localization signal (cNLS) in cargo substrates. Docking of the importin/substrate complex to the nuclear pore complex (NPC) is mediated by importin beta through binding to nucleoporin FxFG repeats and the complex is subsequently translocated through the pore by an energy requiring, Ran-dependent mechanism. At the nucleoplasmic side of the NPC, GTP-Ran binds to importin beta and the three components separate, leading to release of the cargo. Importin alpha and beta are re-exported from the nucleus to the cytoplasm where GTP hydrolysis releases Ran from importin beta. The directionality of nuclear import is thought to be conferred by an asymmetric distribution of the GTP- and GDP-bound forms of Ran between the cytoplasm and nucleus. Mediates the nuclear import of histones H2A and H2B. Mediates the nuclear import of transcription factor GCN4. This is Importin subunit beta-1 from Saccharomyces cerevisiae (strain ATCC 204508 / S288c) (Baker's yeast).